The sequence spans 166 residues: NAD(P)H-quinone oxidoreductase subunit I, chloroplastic (166 aa).

4Fe-4S ferredoxin-type domains are found at residues 55–84 and 95–124; these read GRIH…VDWK and LNYS…MTEE. Residues cysteine 64, cysteine 67, cysteine 70, cysteine 74, cysteine 104, cysteine 107, cysteine 110, and cysteine 114 each coordinate [4Fe-4S] cluster.

The protein belongs to the complex I 23 kDa subunit family. As to quaternary structure, NDH is composed of at least 16 different subunits, 5 of which are encoded in the nucleus. The cofactor is [4Fe-4S] cluster.

The protein localises to the plastid. It localises to the chloroplast thylakoid membrane. The enzyme catalyses a plastoquinone + NADH + (n+1) H(+)(in) = a plastoquinol + NAD(+) + n H(+)(out). It catalyses the reaction a plastoquinone + NADPH + (n+1) H(+)(in) = a plastoquinol + NADP(+) + n H(+)(out). In terms of biological role, NDH shuttles electrons from NAD(P)H:plastoquinone, via FMN and iron-sulfur (Fe-S) centers, to quinones in the photosynthetic chain and possibly in a chloroplast respiratory chain. The immediate electron acceptor for the enzyme in this species is believed to be plastoquinone. Couples the redox reaction to proton translocation, and thus conserves the redox energy in a proton gradient. In Ambrosia trifida (Giant ragweed), this protein is NAD(P)H-quinone oxidoreductase subunit I, chloroplastic.